We begin with the raw amino-acid sequence, 1386 residues long: DNA-directed RNA polymerase subunit beta (1386 aa).

This sequence belongs to the RNA polymerase beta chain family. In terms of assembly, in plastids the minimal PEP RNA polymerase catalytic core is composed of four subunits: alpha, beta, beta', and beta''. When a (nuclear-encoded) sigma factor is associated with the core the holoenzyme is formed, which can initiate transcription.

It is found in the plastid. It localises to the chloroplast. The catalysed reaction is RNA(n) + a ribonucleoside 5'-triphosphate = RNA(n+1) + diphosphate. Functionally, DNA-dependent RNA polymerase catalyzes the transcription of DNA into RNA using the four ribonucleoside triphosphates as substrates. This chain is DNA-directed RNA polymerase subunit beta, found in Thalassiosira pseudonana (Marine diatom).